The chain runs to 393 residues: Arginine biosynthesis bifunctional protein ArgJ (393 aa).

Thr145, Lys171, Thr182, Glu265, Asn388, and Ser393 together coordinate substrate. Thr182 serves as the catalytic Nucleophile.

The protein belongs to the ArgJ family. Heterotetramer of two alpha and two beta chains.

The protein resides in the cytoplasm. The catalysed reaction is N(2)-acetyl-L-ornithine + L-glutamate = N-acetyl-L-glutamate + L-ornithine. The enzyme catalyses L-glutamate + acetyl-CoA = N-acetyl-L-glutamate + CoA + H(+). Its pathway is amino-acid biosynthesis; L-arginine biosynthesis; L-ornithine and N-acetyl-L-glutamate from L-glutamate and N(2)-acetyl-L-ornithine (cyclic): step 1/1. It functions in the pathway amino-acid biosynthesis; L-arginine biosynthesis; N(2)-acetyl-L-ornithine from L-glutamate: step 1/4. Catalyzes two activities which are involved in the cyclic version of arginine biosynthesis: the synthesis of N-acetylglutamate from glutamate and acetyl-CoA as the acetyl donor, and of ornithine by transacetylation between N(2)-acetylornithine and glutamate. The chain is Arginine biosynthesis bifunctional protein ArgJ from Nitratidesulfovibrio vulgaris (strain ATCC 29579 / DSM 644 / CCUG 34227 / NCIMB 8303 / VKM B-1760 / Hildenborough) (Desulfovibrio vulgaris).